A 247-amino-acid polypeptide reads, in one-letter code: MAHEGHSQHSGLVWALRPILAWIFLVACGWSHPLQTRSWGHPGLAAKVRTGQLQPAGHPQSSVLPSYPRIQVPGSQTPPVPVPCCTAEIDRPESLLESCGAPSPECEFFLGQLQGALRDRFHPQLFGARPVQPLCPELCQIWFTTCQADFICGPTWLQSSGERGCEPSCRTYGQTFANATDLCHSVLGHVLRVAAPGSSHCLNVSISSPGARRRPRAWISNVVGSGSGSGSGDSPEPMFGFQYVSLP.

The first 31 residues, 1-31, serve as a signal peptide directing secretion; the sequence is MAHEGHSQHSGLVWALRPILAWIFLVACGWS. Disulfide bonds link C99–C169, C106–C146, C139–C183, and C152–C165.

Belongs to the folate receptor family. Post-translationally, not N-glycosylated. As to expression, expressed in the peripheral retina where it localizes to the inter-photoreceptor matrix (at protein level). May be produced by rod photoreceptors (at protein level).

It is found in the secreted. It localises to the extracellular space. Its subcellular location is the extracellular matrix. The protein localises to the interphotoreceptor matrix. The protein resides in the cell membrane. Riboflavin-binding protein which might have a role in retinal flavin transport. This is Retbindin (Rtbdn) from Mus musculus (Mouse).